Here is a 79-residue protein sequence, read N- to C-terminus: Sulfur carrier protein TusA (79 aa).

C17 serves as the catalytic Cysteine persulfide intermediate.

Belongs to the sulfur carrier protein TusA family.

It is found in the cytoplasm. In terms of biological role, sulfur carrier protein which probably makes part of a sulfur-relay system. The sequence is that of Sulfur carrier protein TusA from Pseudoalteromonas translucida (strain TAC 125).